The chain runs to 1143 residues: ATP-dependent helicase/deoxyribonuclease subunit B (1143 aa).

A UvrD-like helicase ATP-binding domain is found at 1-274 (MNYMHLGRAG…YGQTVKFQST (274 aa)). 7-14 (GRAGTGKT) is an ATP binding site. In terms of domain architecture, UvrD-like helicase C-terminal spans 267–565 (QTVKFQSTGL…RFSLVPPSLD (299 aa)). Residues Cys-782, Cys-1104, Cys-1107, and Cys-1113 each coordinate [4Fe-4S] cluster.

The protein belongs to the helicase family. AddB/RexB type 1 subfamily. Heterodimer of AddA and AddB. Requires Mg(2+) as cofactor. It depends on [4Fe-4S] cluster as a cofactor.

Its function is as follows. The heterodimer acts as both an ATP-dependent DNA helicase and an ATP-dependent, dual-direction single-stranded exonuclease. Recognizes the chi site generating a DNA molecule suitable for the initiation of homologous recombination. The AddB subunit has 5' -&gt; 3' nuclease activity but not helicase activity. The polypeptide is ATP-dependent helicase/deoxyribonuclease subunit B (Exiguobacterium sibiricum (strain DSM 17290 / CCUG 55495 / CIP 109462 / JCM 13490 / 255-15)).